Reading from the N-terminus, the 434-residue chain is Eukaryotic translation initiation factor 3 subunit E (434 aa).

The 174-residue stretch at 219–392 folds into the PCI domain; sequence FFNHPKGRDL…GHVVMGTQPL (174 aa).

It belongs to the eIF-3 subunit E family. As to quaternary structure, component of the eukaryotic translation initiation factor 3 (eIF-3) complex. The eIF-3 complex interacts with pix. Interacts with mxt.

It localises to the cytoplasm. Component of the eukaryotic translation initiation factor 3 (eIF-3) complex, which is involved in protein synthesis of a specialized repertoire of mRNAs and, together with other initiation factors, stimulates binding of mRNA and methionyl-tRNAi to the 40S ribosome. The eIF-3 complex specifically targets and initiates translation of a subset of mRNAs involved in cell proliferation. This Drosophila grimshawi (Hawaiian fruit fly) protein is Eukaryotic translation initiation factor 3 subunit E (eIF3-S6).